The following is a 203-amino-acid chain: Mpv17-like protein (203 aa).

Residues 1-12 are Cytoplasmic-facing; that stretch reads MRILIQFTKRHP. Residues 13–30 form a helical membrane-spanning segment; that stretch reads WLTNVTIYGSLFASADIV. Over 31–49 the chain is Lumenal; it reads QQKLSKSPTEPIDFKQTAK. The helical transmembrane segment at 50–69 threads the bilayer; it reads VGLVGFCFHANFNFFWLRFI. Residues 70 to 89 lie on the Cytoplasmic side of the membrane; the sequence is ERTFPGSAPLNVIRKVACDQ. The chain crosses the membrane as a helical span at residues 90-107; it reads LMAAPITISAFYTGLSLL. The Lumenal segment spans residues 108–143; that stretch reads DGERDVFKNLKEKFWPTYKTGVMCWTVFQTINFSVI. Residues 144 to 166 form a helical membrane-spanning segment; the sequence is PPFVRTAYIGVCAFLWTTFLCYI. Topologically, residues 167 to 203 are cytoplasmic; it reads RNRDINEVTTRLLHAVPNIRGKMAFPQDQDDNKPADK.

This sequence belongs to the peroxisomal membrane protein PXMP2/4 family.

The protein localises to the peroxisome membrane. Participates in reactive oxygen species metabolism by up- or down-regulation of the genes of antioxidant enzymes. Protective against the mitochondrial apoptotic cascade. In Xenopus laevis (African clawed frog), this protein is Mpv17-like protein (mpv17l).